A 471-amino-acid chain; its full sequence is ATP synthase subunit beta (471 aa).

156–163 is an ATP binding site; sequence GGAGVGKT.

It belongs to the ATPase alpha/beta chains family. F-type ATPases have 2 components, CF(1) - the catalytic core - and CF(0) - the membrane proton channel. CF(1) has five subunits: alpha(3), beta(3), gamma(1), delta(1), epsilon(1). CF(0) has three main subunits: a(1), b(2) and c(9-12). The alpha and beta chains form an alternating ring which encloses part of the gamma chain. CF(1) is attached to CF(0) by a central stalk formed by the gamma and epsilon chains, while a peripheral stalk is formed by the delta and b chains.

It localises to the cell membrane. The catalysed reaction is ATP + H2O + 4 H(+)(in) = ADP + phosphate + 5 H(+)(out). In terms of biological role, produces ATP from ADP in the presence of a proton gradient across the membrane. The catalytic sites are hosted primarily by the beta subunits. The protein is ATP synthase subunit beta of Mycoplasmoides gallisepticum (strain R(low / passage 15 / clone 2)) (Mycoplasma gallisepticum).